Consider the following 140-residue polypeptide: ATP synthase epsilon chain (140 aa).

It belongs to the ATPase epsilon chain family. As to quaternary structure, F-type ATPases have 2 components, CF(1) - the catalytic core - and CF(0) - the membrane proton channel. CF(1) has five subunits: alpha(3), beta(3), gamma(1), delta(1), epsilon(1). CF(0) has three main subunits: a, b and c.

It is found in the cell inner membrane. Functionally, produces ATP from ADP in the presence of a proton gradient across the membrane. The protein is ATP synthase epsilon chain of Colwellia psychrerythraea (strain 34H / ATCC BAA-681) (Vibrio psychroerythus).